A 573-amino-acid polypeptide reads, in one-letter code: FACT complex subunit pob3 (573 aa).

2 disordered regions span residues 153-174 (SDGD…KAAA) and 485-573 (LDND…KIGK). Acidic residues predominate over residues 486–495 (DNDDMMSSDE). The span at 496 to 505 (DGGRADRGSA) shows a compositional bias: basic and acidic residues. Composition is skewed to acidic residues over residues 506–530 (DEDE…EFDS) and 541–562 (AEMD…SEEE).

Belongs to the SSRP1 family. Forms a stable heterodimer with spt16. The spt16-pob3 dimer weakly associates with multiple molecules of nhp6 to form the FACT complex.

The protein resides in the nucleus. It localises to the chromosome. Its function is as follows. Component of the FACT complex, a general chromatin factor that acts to reorganize nucleosomes. The FACT complex is involved in multiple processes that require DNA as a template such as mRNA elongation, DNA replication and DNA repair. During transcription elongation the FACT complex acts as a histone chaperone that both destabilizes and restores nucleosomal structure. It facilitates the passage of RNA polymerase II and transcription by promoting the dissociation of one histone H2A-H2B dimer from the nucleosome, then subsequently promotes the reestablishment of the nucleosome following the passage of RNA polymerase II. This Aspergillus fumigatus (strain ATCC MYA-4609 / CBS 101355 / FGSC A1100 / Af293) (Neosartorya fumigata) protein is FACT complex subunit pob3 (pob3).